The sequence spans 116 residues: Large ribosomal subunit protein uL23 (116 aa).

It belongs to the universal ribosomal protein uL23 family. As to quaternary structure, part of the 50S ribosomal subunit. Contacts protein L29, and trigger factor when it is bound to the ribosome.

In terms of biological role, one of the early assembly proteins it binds 23S rRNA. One of the proteins that surrounds the polypeptide exit tunnel on the outside of the ribosome. Forms the main docking site for trigger factor binding to the ribosome. This Psychrobacter sp. (strain PRwf-1) protein is Large ribosomal subunit protein uL23.